The primary structure comprises 353 residues: Fasciculation and elongation protein zeta-2 (353 aa).

Positions 19-49 (SLLDQENCNASPEPGAEAGAEAGGGADGFPA) are disordered. The span at 28–38 (ASPEPGAEAGA) shows a compositional bias: low complexity. Phosphoserine is present on residues Ser-135, Ser-176, and Ser-195. Residues 214–286 (KRLSVSELNE…AKKKKKLKNG (73 aa)) adopt a coiled-coil conformation. The interval 271–300 (KEHKETAKKKKKLKNGSSQNGKNERSHMPG) is disordered.

This sequence belongs to the zygin family. As to quaternary structure, homodimer; disulfide-linked. May form heterodimers with FEZ1. Interacts with synaptotagmin. In terms of tissue distribution, expressed in nonneural tissues, such as heart, lung, spleen, muscle, testis, placenta and melanocytes.

In terms of biological role, involved in axonal outgrowth and fasciculation. In Homo sapiens (Human), this protein is Fasciculation and elongation protein zeta-2 (FEZ2).